A 186-amino-acid polypeptide reads, in one-letter code: MKVSKYVAIFFFVFIQLISVGKVFANADEWMTTFRENIAQTWQQPEHYDLYIPAITWHARFAYDKEKTDRYNERPWGGGFGQSRWDEKGNWHGLYAMAFKDSWNKWEPIAGYGWESTWRPLADENFHLGLGFTAGVTARDNWNYIPLPVLLPLASVGYGPATFQMTYIPGTYNNGNVYFAWMRFQF.

Residues 1–25 form the signal peptide; the sequence is MKVSKYVAIFFFVFIQLISVGKVFA. Active-site residues include H58, D101, and S102.

The protein belongs to the lipid A palmitoyltransferase family. Homodimer.

It is found in the cell outer membrane. The enzyme catalyses lipid A (E. coli) + a 1-hexadecanoyl-2-acyl-sn-glycero-3-phosphocholine = hepta-acyl lipid A (E. coli) + a 2-acyl-sn-glycero-3-phosphocholine. The catalysed reaction is lipid IIA + a 1-hexadecanoyl-2-acyl-sn-glycero-3-phosphocholine = lipid IIB + a 2-acyl-sn-glycero-3-phosphocholine. It carries out the reaction lipid IVA (E. coli) + a 1-hexadecanoyl-2-acyl-sn-glycero-3-phosphocholine = lipid IVB (E. coli) + a 2-acyl-sn-glycero-3-phosphocholine. Functionally, transfers a palmitate residue from the sn-1 position of a phospholipid to the N-linked hydroxymyristate on the proximal unit of lipid A or its precursors. In Escherichia coli O6:K15:H31 (strain 536 / UPEC), this protein is Lipid A palmitoyltransferase PagP.